A 292-amino-acid polypeptide reads, in one-letter code: Cholesterol ring-cleaving hydrolase IpdA subunit (292 aa).

This sequence belongs to the 3-oxoacid CoA-transferase subunit A family. As to quaternary structure, heterotetramer composed of 2 IpdA subunits and 2 IpdB subunits.

The catalysed reaction is (3E)-2-(2-carboxylatoethyl)-3-methyl-6-oxocyclohex-1-ene-1-carboxyl-CoA + H2O = 6-methyl-3,7-dioxodecanedioyl-CoA. Its pathway is steroid metabolism; cholesterol degradation. Involved in the final steps of cholesterol and steroid degradation. Opens the last steroid ring of cholesterol by catalyzing the hydrolysis of (3E)-2-(2-carboxylatoethyl)-3-methyl-6-oxocyclohex-1-ene-1-carboxyl-CoA (COCHEA-CoA) to 6-methyl-3,7-dioxodecanedioyl-CoA (MeDODA-CoA). The sequence is that of Cholesterol ring-cleaving hydrolase IpdA subunit from Mycobacterium tuberculosis (strain CDC 1551 / Oshkosh).